Reading from the N-terminus, the 947-residue chain is MLIRNLLCLLERVAAEPMSGEIICYSPHANAGYCSWSYTQLLVEAQRASHALESTHGKALVPGSRVLLHFTSHWDNIVWFWAVLLAGCIPVMSTALPTNGFLRKAHLEHLARTLINPLCLTRAVSVSEFADQDAVNPIVIESLDLAKPLGPSNNPSGSRKHTRGLEDTAAVLLTSGSTGRCKAVCLSHGQVLAAARGKLDALPPADESFLNWISLDHVAALVEVHIQAMLARKTQIHVPAPYLVSQPTKLLDLVHAHRVSRTFAPNFFLARLREALKNCPTTTANENLNGATSIRADQPSRWDLSCLRCINSGGEPNKTRTCQEVSEALAQYGAPGNIIVPGFGMTETCAGAIFNQHCPRYDLDHQLEFASVGRCMPGISIRISAGLNSNQPVPIGQPGFFQVAGPVVFKEYFNNKHATTEAFTSDGWFKTGDLALIDERGHLSLTGRSKETMIVNGVNYDPQSVEDAVNEASIPGLVPSFSCCFSCLPAGSETEEICLVYLPTYQKDDVAARVETTASISRVVMMAVGVLPQVIPLDEAHLQKSSLGKLSRARVKAAYLRGEYNAQRNLNHDLIRAFRRETRTAPENEFERDLLAAVIDSLGPLDEDEFGVDTPILDLGITSIELIKLKKDLEASLRLHRDIPLITLLTHPTVRDLGTALRKLQGTQVYDPVIKLQAEGTKTPLWLVHPGVGEVLVFLNLAKFIKDRPVYAFRARGLGGDDERPFTNISEAVKTYYTALKHEQPNGPYAIAGYSYGSMLAFEISKLLEANNDRVSFIGSFNLPPHIKTRMRQLDFKECLLHLSYFLDLMTEARARELADELRDCSRDGALETVMQNASPTRLAELALSSSGLLRWANVAFALQSMAVDYEPTSSVSGLDCFYCIPLAVVAASKQQWLEDHLAKWNDFTRSPVRFHSVGGAHYTMLSPEHVFDFQKTLRRALENRGI.

The interval 25 to 413 is adenylation (A) domain; that stretch reads YSPHANAGYC…AGPVVFKEYF (389 aa). One can recognise a Carrier domain in the interval 585-665; the sequence is APENEFERDL…DLGTALRKLQ (81 aa). Ser-623 is subject to O-(pantetheine 4'-phosphoryl)serine. A thioesterase (TE) domain region spans residues 684-934; it reads PLWLVHPGVG…MLSPEHVFDF (251 aa).

It belongs to the NRP synthetase family.

The enzyme catalyses 2 3-(4-hydroxyphenyl)pyruvate + 2 ATP = atromentin + 2 AMP + 2 diphosphate + H(+). It participates in secondary metabolite biosynthesis. Functionally, nonribosomal peptide synthetase that mediates the biosynthesis of usterphenyllins and uscandidusins, p-terphenyl derivatives. Within the pathway, ucdA condenses two 4-hydroxyphenylpyruvate (HPPA) units to produce atromentin. UcdA first activates HPPA through its A domain to AMP-HPPA. The HPPA unit is then loaded to the T domain and eventually transferred to the TE domain. Another HPPA unit is then loaded onto the T domain. The TE domain then catalyzes the condensation of the two HPPA units and the release of atromentin via cyclization. The pathway begin with the biosynthesis of 4-hydroxyphenylpyruvate (HPPA) from L-tyrosine, possibly by the aminotransferase ucdG. The nonribosomal peptide synthetase ucdA then condenses two HPPA units to produce atromentin. The key step in this pathway is the reduction and dehydration of atromentin to form a terphenyl triol intermediate, performed by the NAD-dependent dehydrogenase ucdB. Further O-methylation by the methyltransferase ucdC forms terphenyllin carrying two methoxy moieties at C-9 and C-12, and subsequent dihydroxylation at C-3 of ring A and C-15 of ring C by the flavin-dependent oxygenase ucdD leads to 3,15-dihydroxyterphenyllin. Prenylation by ucdE at position C-5 of ring A forms usterphenyllin B, and is followed by a second prenylation at position C-14 of ring C to form usterphenyllin A. The following furan ring formation that leads to uscandidusins A and B was proven to be an unexpected spontaneous non-enzymatic reaction. The polypeptide is Nonribosomal peptide synthetase ucdA (Aspergillus ustus).